We begin with the raw amino-acid sequence, 896 residues long: C-type lectin domain-containing protein 180 (896 aa).

Residues 1-18 (MRHLIFTGFVLTLTALEA) form the signal peptide. One can recognise a C-type lectin domain in the interval 54–178 (PWGDLYQFRA…CESTSPDHHA (125 aa)). Residue asparagine 133 is glycosylated (N-linked (GlcNAc...) asparagine). Residues cysteine 154 and cysteine 169 are joined by a disulfide bond. N-linked (GlcNAc...) asparagine glycans are attached at residues asparagine 221 and asparagine 235. 4 disordered regions span residues 243-264 (STVK…SVSK), 354-436 (VKQE…LAPE), 492-519 (EKLE…EEQK), and 557-809 (KVKA…TTKP). Acidic residues predominate over residues 250 to 260 (SEEETSSEEEE). Composition is skewed to basic and acidic residues over residues 354-382 (VKQE…KISE) and 395-406 (DMPKADIEPPKE). Over residues 407 to 426 (EDCDEEGSGSGSGEEDEKDE) the composition is skewed to acidic residues. The span at 427 to 436 (SSEKIELAPE) shows a compositional bias: basic and acidic residues. Composition is skewed to basic and acidic residues over residues 575–590 (KSAK…KVGN), 607–663 (QNRE…ETKL), and 683–692 (EEPKSDKDSE). Residues 727–739 (STTTESTTVAVKE) are compositionally biased toward low complexity. Over residues 740–768 (VPVDEIEKIAKLEAKQHTEDEKVTVETKQ) the composition is skewed to basic and acidic residues. Over residues 773-809 (TPAPTTSEKTSTTAAPSTKPAEETTTTTEAPSTTTKP) the composition is skewed to low complexity.

The protein localises to the secreted. In Caenorhabditis elegans, this protein is C-type lectin domain-containing protein 180 (clec-180).